The chain runs to 257 residues: uncharacterized protein (257 aa).

NAD(+) is bound by residues Asp34, Asp60, Val61, Asn87, Tyr152, and Lys156. Tyr152 (proton acceptor) is an active-site residue.

Belongs to the short-chain dehydrogenases/reductases (SDR) family.

This is an uncharacterized protein from Bacillus subtilis (strain 168).